The sequence spans 459 residues: Glutamate--tRNA ligase 2 (459 aa).

The short motif at 8-18 (PSPTGYIHIGN) is the 'HIGH' region element. The 'KMSKS' region motif lies at 249–253 (GLSKR). K252 provides a ligand contact to ATP.

It belongs to the class-I aminoacyl-tRNA synthetase family. Glutamate--tRNA ligase type 1 subfamily. As to quaternary structure, monomer.

Its subcellular location is the cytoplasm. The catalysed reaction is tRNA(Glu) + L-glutamate + ATP = L-glutamyl-tRNA(Glu) + AMP + diphosphate. In terms of biological role, catalyzes the attachment of glutamate to tRNA(Glu) in a two-step reaction: glutamate is first activated by ATP to form Glu-AMP and then transferred to the acceptor end of tRNA(Glu). The protein is Glutamate--tRNA ligase 2 of Bartonella henselae (strain ATCC 49882 / DSM 28221 / CCUG 30454 / Houston 1) (Rochalimaea henselae).